The following is a 130-amino-acid chain: Small ribosomal subunit protein uS11 (130 aa).

The tract at residues 1-21 is disordered; that stretch reads MAPQSKRSGGRKQKKHVPNGV. Residues 8–17 show a composition bias toward basic residues; sequence SGGRKQKKHV.

This sequence belongs to the universal ribosomal protein uS11 family. As to quaternary structure, part of the 30S ribosomal subunit. Interacts with proteins S7 and S18. Binds to IF-3.

Its function is as follows. Located on the platform of the 30S subunit, it bridges several disparate RNA helices of the 16S rRNA. Forms part of the Shine-Dalgarno cleft in the 70S ribosome. This is Small ribosomal subunit protein uS11 from Acaryochloris marina (strain MBIC 11017).